Here is a 32-residue protein sequence, read N- to C-terminus: Peptide tarsal-less AA (32 aa).

The interval 1–32 (MLDPTGTYRRPRDTQDSRQKRRQDCLDPTGQY) is disordered. Residues 2–8 (LDPTGTY) form repeat 1. The tract at residues 2 to 32 (LDPTGTYRRPRDTQDSRQKRRQDCLDPTGQY) is 2 X 7 AA repeats of L-D-P-T-G-[TQ]-Y. Positions 10 to 25 (RPRDTQDSRQKRRQDC) are enriched in basic and acidic residues. Residues 26 to 32 (LDPTGQY) form repeat 2.

Its subcellular location is the cytoplasm. It is found in the nucleus. Its function is as follows. One of four peptides (tal-1A, tal-2A, tal-3A and tal-AA) produced from a polycistronic gene that function redundantly in several developmental processes. Required in early stages of leg development for the intercalation of the tarsal segments during the mid-third instar stage and later for tarsal joint formation. Promotes the post-translational modification of ovo isoform B (svb) into its active form which in turn initiates trichome development and promotes tarsal joint development. This is likely due to recruitment of the E3 ubiquitin-protein ligase Ubr3 to svb for ubiquitination of its N-terminus, converting svb into a transcriptional activator. Also enhances interaction of Ubr3 with Diap1. Required for correct wing and leg formation through its regulation of several genes including those in the Notch signaling pathway. Essential for denticle formation and may have a role in the developmental timing of trichome differentiation. Essential for the development of taenidial folds in the trachea. In Drosophila melanogaster (Fruit fly), this protein is Peptide tarsal-less AA.